A 114-amino-acid chain; its full sequence is Ribonuclease P protein component (114 aa).

Belongs to the RnpA family. In terms of assembly, consists of a catalytic RNA component (M1 or rnpB) and a protein subunit.

The catalysed reaction is Endonucleolytic cleavage of RNA, removing 5'-extranucleotides from tRNA precursor.. Functionally, RNaseP catalyzes the removal of the 5'-leader sequence from pre-tRNA to produce the mature 5'-terminus. It can also cleave other RNA substrates such as 4.5S RNA. The protein component plays an auxiliary but essential role in vivo by binding to the 5'-leader sequence and broadening the substrate specificity of the ribozyme. The polypeptide is Ribonuclease P protein component (Legionella pneumophila (strain Lens)).